The following is a 437-amino-acid chain: U1 small nuclear ribonucleoprotein 70 kDa (437 aa).

Position 2 is an N-acetylthreonine (T2). A disordered region spans residues F48–Q79. Residues A60–Q79 show a composition bias toward basic and acidic residues. Positions H92–G202 are required for interaction with U1 RNA. One can recognise an RRM domain in the interval K103–G181. Position 118 is an N6-acetyllysine (K118). Y126 bears the Phosphotyrosine mark. Positions W187–E437 are disordered. A compositionally biased stretch (gly residues) spans L192–R201. Positions N207–R254 are enriched in basic and acidic residues. S226 and S268 each carry phosphoserine. Residues R255–S268 are compositionally biased toward basic residues. 2 stretches are compositionally biased toward basic and acidic residues: residues R269 to R286 and R294 to R310. S320 bears the Phosphoserine mark. Basic and acidic residues predominate over residues P343–R393. K346 participates in a covalent cross-link: Glycyl lysine isopeptide (Lys-Gly) (interchain with G-Cter in SUMO2). Position 410 is a phosphoserine (S410).

Component of the U1 snRNP. The U1 snRNP is composed of the U1 snRNA and the 7 core Sm proteins SNRPB, SNRPD1, SNRPD2, SNRPD3, SNRPE, SNRPF and SNRPG that assemble in a heptameric protein ring on the Sm site of the small nuclear RNA to form the core snRNP, and at least three U1 snRNP-specific proteins SNRNP70/U1-70K, SNRPA/U1-A and SNRPC/U1-C. Interacts with SCNM1. Found in a pre-mRNA splicing complex with SFRS4, SFRS5, SNRNP70, SNRPA1, SRRM1 and SRRM2. Found in a pre-mRNA exonic splicing enhancer (ESE) complex with SNRNP70, SNRPA1, SRRM1 and TRA2B/SFRS10. Interacts with dephosphorylated SFRS13A and SFPQ. Interacts with NUDT21/CPSF5, CPSF6, SCAF11, and ZRANB2. Interacts with GEMIN5. Interacts with FUS. The N-terminus is blocked. Post-translationally, extensively phosphorylated on serine residues in the C-terminal region.

The protein resides in the nucleus speckle. The protein localises to the nucleus. Its subcellular location is the nucleoplasm. In terms of biological role, component of the spliceosomal U1 snRNP, which is essential for recognition of the pre-mRNA 5' splice-site and the subsequent assembly of the spliceosome. SNRNP70 binds to the loop I region of U1-snRNA. Truncated isoforms that lack the RRM domain cannot bind U1-snRNA. The protein is U1 small nuclear ribonucleoprotein 70 kDa (SNRNP70) of Homo sapiens (Human).